Here is a 316-residue protein sequence, read N- to C-terminus: Ribosomal RNA small subunit methyltransferase H (316 aa).

Residues 35–37 (SGH), Asp55, Phe84, Asp105, and Gln112 contribute to the S-adenosyl-L-methionine site.

It belongs to the methyltransferase superfamily. RsmH family.

The protein localises to the cytoplasm. The catalysed reaction is cytidine(1402) in 16S rRNA + S-adenosyl-L-methionine = N(4)-methylcytidine(1402) in 16S rRNA + S-adenosyl-L-homocysteine + H(+). Functionally, specifically methylates the N4 position of cytidine in position 1402 (C1402) of 16S rRNA. This chain is Ribosomal RNA small subunit methyltransferase H, found in Streptococcus equi subsp. zooepidemicus (strain MGCS10565).